The sequence spans 428 residues: Histidine--tRNA ligase (428 aa).

It belongs to the class-II aminoacyl-tRNA synthetase family. Homodimer.

It localises to the cytoplasm. It catalyses the reaction tRNA(His) + L-histidine + ATP = L-histidyl-tRNA(His) + AMP + diphosphate + H(+). The protein is Histidine--tRNA ligase of Pseudomonas entomophila (strain L48).